We begin with the raw amino-acid sequence, 243 residues long: uncharacterized protein (243 aa).

The N-terminal stretch at 1–19 is a signal peptide; the sequence is MKSLPLLGILAFAANRLSA. N-linked (GlcNAc...) asparagine glycans are attached at residues Asn-112 and Asn-206.

This is an uncharacterized protein from Encephalitozoon cuniculi (strain GB-M1) (Microsporidian parasite).